The sequence spans 961 residues: SH3 domain-binding protein 4 (961 aa).

The 60-residue stretch at 55–114 (GNAKEVIAIKDYCPNNFTTLKFSKGDHLYVLDTSGGEWWYAHNTTEMGYIPSSYVQPLNY) folds into the SH3 1 domain. Phosphoserine is present on residues serine 131, serine 244, serine 249, serine 277, and serine 294. The ZU5 domain maps to 315-452 (TNIVCKLDSS…LEPCMYLAIV (138 aa)). Serine 635 is subject to Phosphoserine. Residues 652–722 (SSLKFGKLLK…HTKNVLVVGK (71 aa)) enclose the SH3 2 domain.

In terms of assembly, homodimer or homooligomer. Interacts with DNM2, EPS15, clathrin, the adapter protein complex 2/AP-2 and TFRC. Interacts with the Rag GTPases RRAGA, RRAGB, RRAGC and RRAGD; the interaction is most probably direct, preferentially occurs with their inactive GDP-bound form and is negatively regulated by amino acids. Post-translationally, phosphorylated upon EGF stimulation. Phosphorylation prevents interaction with DNM2.

It localises to the membrane. The protein resides in the clathrin-coated pit. Its subcellular location is the cytoplasmic vesicle. The protein localises to the clathrin-coated vesicle. It is found in the nucleus. In terms of biological role, may function in transferrin receptor internalization at the plasma membrane through a cargo-specific control of clathrin-mediated endocytosis. Alternatively, may act as a negative regulator of the amino acid-induced TOR signaling by inhibiting the formation of active Rag GTPase complexes. Preferentially binds inactive Rag GTPase complexes and prevents their interaction with the mTORC1 complex inhibiting its relocalization to lysosomes and its activation. Thereby, may indirectly regulate cell growth, proliferation and autophagy. This Rattus norvegicus (Rat) protein is SH3 domain-binding protein 4 (Sh3bp4).